The primary structure comprises 638 residues: Chaperone protein HtpG (638 aa).

Residues methionine 1–arginine 343 are a; substrate-binding. Residues glutamate 344–lysine 557 form a b region. The interval isoleucine 558–alanine 638 is c.

This sequence belongs to the heat shock protein 90 family. As to quaternary structure, homodimer.

It localises to the cytoplasm. Its function is as follows. Molecular chaperone. Has ATPase activity. The chain is Chaperone protein HtpG from Nitrobacter hamburgensis (strain DSM 10229 / NCIMB 13809 / X14).